We begin with the raw amino-acid sequence, 312 residues long: Olfactory receptor 2T10 (312 aa).

Residues 1–25 are Extracellular-facing; that stretch reads MRLANQTLGGDFFLLGIFSQISHPG. A glycan (N-linked (GlcNAc...) asparagine) is linked at Asn5. Residues 26–49 traverse the membrane as a helical segment; the sequence is RLCLLIFSIFLMAVSWNITLILLI. At 50 to 57 the chain is on the cytoplasmic side; that stretch reads HIDSSLHT. A helical transmembrane segment spans residues 58–79; the sequence is PMYFFINQLSLIDLTYISVTVP. Residues 80–100 are Extracellular-facing; that stretch reads KMLVNQLAKDKTISVLGCGTQ. A disulfide bond links Cys97 and Cys189. The helical transmembrane segment at 101-120 threads the bilayer; sequence MYFYLQLGGAECCLLAAMAY. Topologically, residues 121-139 are cytoplasmic; that stretch reads DRYVAICHPLRYSVLMSHR. A helical membrane pass occupies residues 140–158; the sequence is VCLLLASGCWFVGSVDGFM. Topologically, residues 159–195 are extracellular; sequence LTPIAMSFPFCRSHEIQHFFCEVPAVLKLSCSDTSLY. A helical membrane pass occupies residues 196–219; it reads KIFMYLCCVIMLLIPVTVISVSYY. Topologically, residues 220–236 are cytoplasmic; it reads YIILTIHKMNSVEGRKK. A helical membrane pass occupies residues 237-259; it reads AFTTCSSHITVVSLFYGAAIYNY. At 260-272 the chain is on the extracellular side; it reads MLPSSYQTPEKDM. The chain crosses the membrane as a helical span at residues 273 to 292; sequence MSSFFYTILTPVLNPIIYSF. Over 293 to 312 the chain is Cytoplasmic; sequence RNKDVTRALKKMLSVQKPPY.

Belongs to the G-protein coupled receptor 1 family.

The protein localises to the cell membrane. Odorant receptor. The chain is Olfactory receptor 2T10 (OR2T10) from Homo sapiens (Human).